Reading from the N-terminus, the 174-residue chain is Guided entry of tail-anchored proteins factor 1 (174 aa).

The Lumenal segment spans residues Met-1–Arg-8. A helical membrane pass occupies residues Trp-9–Pro-29. Residues Ser-30 to Lys-99 are Cytoplasmic-facing. Residues Leu-39–Thr-94 adopt a coiled-coil conformation. The segment at Leu-39–Leu-97 is interaction with GET3/TRC40. A helical membrane pass occupies residues Ile-100–Ile-120. The Lumenal segment spans residues Trp-121 to Arg-148. A helical transmembrane segment spans residues Val-149 to Val-169. The Cytoplasmic portion of the chain corresponds to Leu-170 to Ser-174.

It belongs to the WRB/GET1 family. Component of the Golgi to ER traffic (GET) complex, which is composed of GET1/WRB, CAMLG/GET2 and GET3. Within the complex, GET1 and CAMLG form a heterotetramer which is stabilized by phosphatidylinositol binding and which binds to the GET3 homodimer. Interacts with CAMLG (via C-terminus). GET3 shows a higher affinity for CAMLG than for GET1.

Its subcellular location is the endoplasmic reticulum membrane. Its function is as follows. Required for the post-translational delivery of tail-anchored (TA) proteins to the endoplasmic reticulum. Together with CAMLG/GET2, acts as a membrane receptor for soluble GET3/TRC40, which recognizes and selectively binds the transmembrane domain of TA proteins in the cytosol. Required to ensure correct topology and ER insertion of CAMLG. The sequence is that of Guided entry of tail-anchored proteins factor 1 from Bos taurus (Bovine).